The following is a 474-amino-acid chain: MKLSMPRFDQAPVLVVGDVMLDRYWHGGTSRISPEAPVPVVKVEQIEDRPGGAANVALNIAALGAPASLVGVTGDDEAAESLANSLRGAGVRALFQRIAHQPTIVKLRVMSRHQQLLRIDFEEPFATDALALNGQVDELLEGVKVLVLSDYGKGALKNHQELIQAAKAKGIPVLADPKGKDFSIYRGASLITPNLSEFEAIVGGCADEHDLVTKGAALMADLDLGALLVTRGEHGMTLLRPGHPAMHLPARAREVFDVTGAGDTVISTLAASIAAGEELPHAVALANLAAGIVVGKLGTAAISAPELRRAIQRSEGSERGVLTIEQLLLAIDDARAHNESIVFTNGCFDILHAGHVTYLEQARAQGDRLIVAVNDDASVSRLKGPGRPINSVDRRMAVLAGLGAVDWVISFPEATPENLLAQVKPDVLVKGGDYSVDQVVGADIVSAYGGKVKVLGLVENSSTTAIVEKIRNNE.

Residues 1–317 (MKLSMPRFDQ…RRAIQRSEGS (317 aa)) are ribokinase. 194–197 (NLSE) is an ATP binding site. Asp-263 is an active-site residue. The interval 343–474 (FTNGCFDILH…AIVEKIRNNE (132 aa)) is cytidylyltransferase.

This sequence in the N-terminal section; belongs to the carbohydrate kinase PfkB family. It in the C-terminal section; belongs to the cytidylyltransferase family. As to quaternary structure, homodimer.

It carries out the reaction D-glycero-beta-D-manno-heptose 7-phosphate + ATP = D-glycero-beta-D-manno-heptose 1,7-bisphosphate + ADP + H(+). The catalysed reaction is D-glycero-beta-D-manno-heptose 1-phosphate + ATP + H(+) = ADP-D-glycero-beta-D-manno-heptose + diphosphate. It participates in nucleotide-sugar biosynthesis; ADP-L-glycero-beta-D-manno-heptose biosynthesis; ADP-L-glycero-beta-D-manno-heptose from D-glycero-beta-D-manno-heptose 7-phosphate: step 1/4. It functions in the pathway nucleotide-sugar biosynthesis; ADP-L-glycero-beta-D-manno-heptose biosynthesis; ADP-L-glycero-beta-D-manno-heptose from D-glycero-beta-D-manno-heptose 7-phosphate: step 3/4. Catalyzes the phosphorylation of D-glycero-D-manno-heptose 7-phosphate at the C-1 position to selectively form D-glycero-beta-D-manno-heptose-1,7-bisphosphate. In terms of biological role, catalyzes the ADP transfer from ATP to D-glycero-beta-D-manno-heptose 1-phosphate, yielding ADP-D-glycero-beta-D-manno-heptose. The chain is Bifunctional protein HldE from Pseudomonas fluorescens (strain SBW25).